We begin with the raw amino-acid sequence, 814 residues long: Acyl-coenzyme A dehydrogenase (814 aa).

The active-site Proton acceptor is the E497.

It belongs to the acyl-CoA dehydrogenase family. Requires FAD as cofactor.

It carries out the reaction a medium-chain 2,3-saturated fatty acyl-CoA + oxidized [electron-transfer flavoprotein] + H(+) = a medium-chain (2E)-enoyl-CoA + reduced [electron-transfer flavoprotein]. The catalysed reaction is a long-chain 2,3-saturated fatty acyl-CoA + oxidized [electron-transfer flavoprotein] + H(+) = a long-chain (2E)-enoyl-CoA + reduced [electron-transfer flavoprotein]. The protein operates within lipid metabolism; fatty acid beta-oxidation. Catalyzes the dehydrogenation of acyl-coenzymes A (acyl-CoAs) to 2-enoyl-CoAs, the first step of the beta-oxidation cycle of fatty acid degradation. Is required for S.typhimurium to utilize medium- and long-chain fatty acids as sole carbon sources for growth. Is needed for bacterial survival during carbone-source starvation. This is Acyl-coenzyme A dehydrogenase (fadE) from Salmonella typhimurium (strain LT2 / SGSC1412 / ATCC 700720).